Reading from the N-terminus, the 347-residue chain is Large ribosomal subunit protein uL3 (347 aa).

Belongs to the universal ribosomal protein uL3 family. Part of the 50S ribosomal subunit. Forms a cluster with proteins L14 and L24e.

Its function is as follows. One of the primary rRNA binding proteins, it binds directly near the 3'-end of the 23S rRNA, where it nucleates assembly of the 50S subunit. The sequence is that of Large ribosomal subunit protein uL3 from Caldivirga maquilingensis (strain ATCC 700844 / DSM 13496 / JCM 10307 / IC-167).